A 348-amino-acid polypeptide reads, in one-letter code: Probable dual-specificity RNA methyltransferase RlmN (348 aa).

Glutamate 93 (proton acceptor) is an active-site residue. The Radical SAM core domain maps to threonine 99–aspartate 333. Cysteine 106 and cysteine 338 are disulfide-bonded. Residues cysteine 113, cysteine 117, and cysteine 120 each coordinate [4Fe-4S] cluster. S-adenosyl-L-methionine is bound by residues glycine 160–glutamate 161, serine 190, serine 219–histidine 221, and asparagine 295. Cysteine 338 functions as the S-methylcysteine intermediate in the catalytic mechanism.

It belongs to the radical SAM superfamily. RlmN family. The cofactor is [4Fe-4S] cluster.

The protein localises to the cytoplasm. It catalyses the reaction adenosine(2503) in 23S rRNA + 2 reduced [2Fe-2S]-[ferredoxin] + 2 S-adenosyl-L-methionine = 2-methyladenosine(2503) in 23S rRNA + 5'-deoxyadenosine + L-methionine + 2 oxidized [2Fe-2S]-[ferredoxin] + S-adenosyl-L-homocysteine. It carries out the reaction adenosine(37) in tRNA + 2 reduced [2Fe-2S]-[ferredoxin] + 2 S-adenosyl-L-methionine = 2-methyladenosine(37) in tRNA + 5'-deoxyadenosine + L-methionine + 2 oxidized [2Fe-2S]-[ferredoxin] + S-adenosyl-L-homocysteine. Functionally, specifically methylates position 2 of adenine 2503 in 23S rRNA and position 2 of adenine 37 in tRNAs. The protein is Probable dual-specificity RNA methyltransferase RlmN of Prochlorococcus marinus (strain MIT 9312).